The following is a 32-amino-acid chain: MSDIN-like toxin proprotein 1 (32 aa).

Positions 1–10 (MSDINATRLP) are excised as a propeptide. The cyclopeptide (Ile-Pro) cross-link spans 11-18 (IFWFIYFP). Residues 19–32 (CVSDVDSTLTRGER) constitute a propeptide that is removed on maturation.

The protein belongs to the MSDIN fungal toxin family. Processed by the macrocyclase-peptidase enzyme POPB to yield a toxic cyclic octapeptide. POPB first removes 10 residues from the N-terminus. Conformational trapping of the remaining peptide forces the enzyme to release this intermediate rather than proceed to macrocyclization. The enzyme rebinds the remaining peptide in a different conformation and catalyzes macrocyclization of the N-terminal 8 residues. Expressed in basidiocarps.

Probable toxin that belongs to the MSDIN-like toxin family responsible for a large number of food poisoning cases and deaths. This is MSDIN-like toxin proprotein 1 from Amanita exitialis (Guangzhou destroying angel).